The primary structure comprises 31 residues: Cyclotide cter-R (31 aa).

The segment at residues 1-31 (GIPCGESCVFIPCTVTALLGCSCKDKVCYKN) is a cross-link (cyclopeptide (Gly-Asn)). 3 disulfides stabilise this stretch: cysteine 4–cysteine 21, cysteine 8–cysteine 23, and cysteine 13–cysteine 28.

This is a cyclic peptide.

It localises to the secreted. Its function is as follows. Probably participates in a plant defense mechanism. This chain is Cyclotide cter-R, found in Clitoria ternatea (Butterfly pea).